The chain runs to 246 residues: Protein PHLOEM PROTEIN 2-LIKE A1 (246 aa).

In terms of tissue distribution, vascular tissues, specifically in phloem companion cell-sieve element complexes.

This Arabidopsis thaliana (Mouse-ear cress) protein is Protein PHLOEM PROTEIN 2-LIKE A1 (PP2A1).